A 212-amino-acid polypeptide reads, in one-letter code: Mediator of RNA polymerase II transcription subunit 20 (212 aa).

This sequence belongs to the Mediator complex subunit 20 family. Interacts with PPARG. Component of the Mediator complex, which is composed of MED1, MED4, MED6, MED7, MED8, MED9, MED10, MED11, MED12, MED13, MED13L, MED14, MED15, MED16, MED17, MED18, MED19, MED20, MED21, MED22, MED23, MED24, MED25, MED26, MED27, MED29, MED30, MED31, CCNC, CDK8 and CDC2L6/CDK11. The MED12, MED13, CCNC and CDK8 subunits form a distinct module termed the CDK8 module. Mediator containing the CDK8 module is less active than Mediator lacking this module in supporting transcriptional activation. Individual preparations of the Mediator complex lacking one or more distinct subunits have been variously termed ARC, CRSP, DRIP, PC2, SMCC and TRAP.

It is found in the nucleus. Component of the Mediator complex, a coactivator involved in the regulated transcription of nearly all RNA polymerase II-dependent genes. Mediator functions as a bridge to convey information from gene-specific regulatory proteins to the basal RNA polymerase II transcription machinery. Mediator is recruited to promoters by direct interactions with regulatory proteins and serves as a scaffold for the assembly of a functional preinitiation complex with RNA polymerase II and the general transcription factors. This chain is Mediator of RNA polymerase II transcription subunit 20 (MED20), found in Homo sapiens (Human).